The primary structure comprises 701 residues: MAQKDVLTDLNKVRNIGIMAHIDAGKTTTTERILYYTGVNYKIGETHDGASTTDWMEQEQERGITITSAAVTCFWNDNQINIIDTPGHVDFTVEVERSLRVLDGAVAVFDGKEGVEPQSEQVWRQADKYDVPRICFVNKMDKLGADFYFTVRTIEERLGATPLVIQLPIGAENDFIGIIDLVEMKAKVWRGETALGEKYEVEDIPAELADKADEYRTKLLEAVAETDEALLEKYFGGEELTVEEIKGAIRKLTVNSELYPVLCGSAFKNKGVQPMLDAVVDYLPSPLDVESVQGHVPNKEDELITRKPSVDEPFSALAFKIAVHPFFGKLTYVRVYSGTVESGSQVINSTKGKKERLGKLFQMHANKENPVERASAGHIYAVIGLKDTTTGDTLSDANQQIVLESMTFPDPVIEVAIEPKTKSDQEKLGTAIQKLAEEDPTFKVHLDQETGQTVIGGMGELHLDILVDRMRREFKVEANVGKPQVAYRETIKRKVEKVEFTHKKQTGGSGQFAKVLIDLEPFSGEDGATYEFENKVTGGRIPREYIPSVDAGAQDAMQYGVLAGYPLVNVKVTLLDGAYHEVDSSEMAFKVAGSQVLKKAAQAAQPVILEPIMAVEVTTPEDYMGEVIGDLNSRRGQIQAMEERAGARVVKAQVPLSEMFGYVGDLRSKTQGRANYSMVFDSYAEVPANVSKEIIAKATGQ.

The tr-type G domain occupies asparagine 11–leucine 287. GTP-binding positions include alanine 20–threonine 27, aspartate 84–histidine 88, and asparagine 138–aspartate 141.

It belongs to the TRAFAC class translation factor GTPase superfamily. Classic translation factor GTPase family. EF-G/EF-2 subfamily.

It is found in the cytoplasm. Functionally, catalyzes the GTP-dependent ribosomal translocation step during translation elongation. During this step, the ribosome changes from the pre-translocational (PRE) to the post-translocational (POST) state as the newly formed A-site-bound peptidyl-tRNA and P-site-bound deacylated tRNA move to the P and E sites, respectively. Catalyzes the coordinated movement of the two tRNA molecules, the mRNA and conformational changes in the ribosome. The chain is Elongation factor G from Mycobacterium sp. (strain JLS).